A 414-amino-acid chain; its full sequence is Secernin-1 (414 aa).

An N-acetylalanine modification is found at Ala-2. Residue Cys-9 is part of the active site.

The protein belongs to the peptidase C69 family. Secernin subfamily.

It is found in the cytoplasm. In terms of biological role, regulates exocytosis in mast cells. Increases both the extent of secretion and the sensitivity of mast cells to stimulation with calcium. In Bos taurus (Bovine), this protein is Secernin-1 (SCRN1).